A 153-amino-acid polypeptide reads, in one-letter code: MKCPFCGKENTRVIDSRPADDCSSIRRRRQCDECSKRFTTYEKVETIPLVVIKKDNNREPYDRSKIEAGVFRSCHKRPISVDQINALVDEVENTIFNLEEKEVPSNKIGEIVMDKLKSLDAVAYVRFASVYREFKDVNTFMNELKKILDHEHV.

The segment at 3–34 is a zinc-finger region; sequence CPFCGKENTRVIDSRPADDCSSIRRRRQCDEC. One can recognise an ATP-cone domain in the interval 49–139; that stretch reads LVVIKKDNNR…VYREFKDVNT (91 aa).

It belongs to the NrdR family. Zn(2+) serves as cofactor.

Its function is as follows. Negatively regulates transcription of bacterial ribonucleotide reductase nrd genes and operons by binding to NrdR-boxes. This is Transcriptional repressor NrdR from Lachnoclostridium phytofermentans (strain ATCC 700394 / DSM 18823 / ISDg) (Clostridium phytofermentans).